We begin with the raw amino-acid sequence, 39 residues long: Natriuretic peptide NsNP-b (39 aa).

A propeptide spanning residues 1–8 (SGSKTAKI) is cleaved from the precursor. Residues Cys12 and Cys28 are joined by a disulfide bond. Residues 19-39 (RIGSTSGMGCGSVPKPTPGGS) form a disordered region.

Belongs to the natriuretic peptide family. Expressed by the venom gland.

It localises to the secreted. Its function is as follows. Snake venom natriuretic peptide that targets both NPR1 and NPR2. Exhibits hypotensive and vasodepressor activities. The chain is Natriuretic peptide NsNP-b from Notechis scutatus scutatus (Mainland tiger snake).